Reading from the N-terminus, the 329-residue chain is Glycerol-3-phosphate dehydrogenase [NAD(P)+] (329 aa).

Residues tryptophan 11, arginine 31, and lysine 105 each contribute to the NADPH site. The sn-glycerol 3-phosphate site is built by lysine 105, glycine 135, and threonine 137. Alanine 139 contributes to the NADPH binding site. The sn-glycerol 3-phosphate site is built by lysine 190, aspartate 243, serine 253, arginine 254, and asparagine 255. Lysine 190 acts as the Proton acceptor in catalysis. Arginine 254 provides a ligand contact to NADPH. The NADPH site is built by valine 277 and glutamate 279.

Belongs to the NAD-dependent glycerol-3-phosphate dehydrogenase family.

The protein localises to the cytoplasm. It catalyses the reaction sn-glycerol 3-phosphate + NAD(+) = dihydroxyacetone phosphate + NADH + H(+). The catalysed reaction is sn-glycerol 3-phosphate + NADP(+) = dihydroxyacetone phosphate + NADPH + H(+). Its pathway is membrane lipid metabolism; glycerophospholipid metabolism. Its function is as follows. Catalyzes the reduction of the glycolytic intermediate dihydroxyacetone phosphate (DHAP) to sn-glycerol 3-phosphate (G3P), the key precursor for phospholipid synthesis. This is Glycerol-3-phosphate dehydrogenase [NAD(P)+] from Maridesulfovibrio salexigens (strain ATCC 14822 / DSM 2638 / NCIMB 8403 / VKM B-1763) (Desulfovibrio salexigens).